Here is an 892-residue protein sequence, read N- to C-terminus: Alanine--tRNA ligase (892 aa).

Positions 574, 578, 676, and 680 each coordinate Zn(2+).

Belongs to the class-II aminoacyl-tRNA synthetase family. Zn(2+) serves as cofactor.

Its subcellular location is the cytoplasm. The catalysed reaction is tRNA(Ala) + L-alanine + ATP = L-alanyl-tRNA(Ala) + AMP + diphosphate. Its function is as follows. Catalyzes the attachment of alanine to tRNA(Ala) in a two-step reaction: alanine is first activated by ATP to form Ala-AMP and then transferred to the acceptor end of tRNA(Ala). Also edits incorrectly charged Ser-tRNA(Ala) and Gly-tRNA(Ala) via its editing domain. The sequence is that of Alanine--tRNA ligase from Prochlorococcus marinus (strain MIT 9303).